We begin with the raw amino-acid sequence, 353 residues long: Photosystem II D2 protein (353 aa).

Thr-2 is subject to N-acetylthreonine. Thr-2 carries the post-translational modification Phosphothreonine. Residues 41–61 (CAYFALGGWFTGTTFVTSWYT) traverse the membrane as a helical segment. His-118 contributes to the chlorophyll a binding site. Residues 125–141 (GFMLRQFELARSVQLRP) form a helical membrane-spanning segment. Positions 130 and 143 each coordinate pheophytin a. The chain crosses the membrane as a helical span at residues 153 to 166 (VFVSVFLIYPLGQS). His-198 provides a ligand contact to chlorophyll a. Residues 208 to 228 (AALLCAIHGATVENTLFEDGD) traverse the membrane as a helical segment. 2 residues coordinate a plastoquinone: His-215 and Phe-262. Position 215 (His-215) interacts with Fe cation. Position 269 (His-269) interacts with Fe cation. A helical transmembrane segment spans residues 279 to 295 (GLWMSALGVVGLALNLR).

This sequence belongs to the reaction center PufL/M/PsbA/D family. PSII is composed of 1 copy each of membrane proteins PsbA, PsbB, PsbC, PsbD, PsbE, PsbF, PsbH, PsbI, PsbJ, PsbK, PsbL, PsbM, PsbT, PsbX, PsbY, PsbZ, Psb30/Ycf12, at least 3 peripheral proteins of the oxygen-evolving complex and a large number of cofactors. It forms dimeric complexes. The D1/D2 heterodimer binds P680, chlorophylls that are the primary electron donor of PSII, and subsequent electron acceptors. It shares a non-heme iron and each subunit binds pheophytin, quinone, additional chlorophylls, carotenoids and lipids. There is also a Cl(-1) ion associated with D1 and D2, which is required for oxygen evolution. The PSII complex binds additional chlorophylls, carotenoids and specific lipids. serves as cofactor.

It localises to the plastid. Its subcellular location is the chloroplast thylakoid membrane. The enzyme catalyses 2 a plastoquinone + 4 hnu + 2 H2O = 2 a plastoquinol + O2. Its function is as follows. Photosystem II (PSII) is a light-driven water:plastoquinone oxidoreductase that uses light energy to abstract electrons from H(2)O, generating O(2) and a proton gradient subsequently used for ATP formation. It consists of a core antenna complex that captures photons, and an electron transfer chain that converts photonic excitation into a charge separation. The D1/D2 (PsbA/PsbD) reaction center heterodimer binds P680, the primary electron donor of PSII as well as several subsequent electron acceptors. D2 is needed for assembly of a stable PSII complex. The polypeptide is Photosystem II D2 protein (Nymphaea alba (White water-lily)).